The primary structure comprises 794 residues: Phenylalanine--tRNA ligase beta subunit (794 aa).

Residues 39–154 (SSSFSSIITA…ANTPLGESAC (116 aa)) form the tRNA-binding domain. Residues 403 to 481 (PPSPTLTLRT…QPWKIEKKKA (79 aa)) enclose the B5 domain. Asp457, Asp463, Glu466, and Glu467 together coordinate Mg(2+). In terms of domain architecture, FDX-ACB spans 697 to 793 (PIYPSSFRDI…QLDDTKGTID (97 aa)).

It belongs to the phenylalanyl-tRNA synthetase beta subunit family. Type 1 subfamily. In terms of assembly, tetramer of two alpha and two beta subunits. Requires Mg(2+) as cofactor.

It localises to the cytoplasm. It catalyses the reaction tRNA(Phe) + L-phenylalanine + ATP = L-phenylalanyl-tRNA(Phe) + AMP + diphosphate + H(+). The protein is Phenylalanine--tRNA ligase beta subunit of Chlamydia abortus (strain DSM 27085 / S26/3) (Chlamydophila abortus).